Here is a 623-residue protein sequence, read N- to C-terminus: V-type proton ATPase catalytic subunit A (623 aa).

Gly252–Thr259 contacts ATP.

This sequence belongs to the ATPase alpha/beta chains family. V-ATPase is a heteromultimeric enzyme composed of a peripheral catalytic V1 complex (main components: subunits A, B, C, D, E, and F) attached to an integral membrane V0 proton pore complex (main component: the proteolipid protein).

The catalysed reaction is ATP + H2O + 4 H(+)(in) = ADP + phosphate + 5 H(+)(out). Functionally, catalytic subunit of the peripheral V1 complex of vacuolar ATPase. V-ATPase vacuolar ATPase is responsible for acidifying a variety of intracellular compartments in eukaryotic cells. The chain is V-type proton ATPase catalytic subunit A from Beta vulgaris (Sugar beet).